The sequence spans 500 residues: Probable cytosol aminopeptidase (500 aa).

The Mn(2+) site is built by lysine 268 and aspartate 273. Lysine 280 is an active-site residue. Mn(2+)-binding residues include aspartate 291, aspartate 350, and glutamate 352. The active site involves arginine 354.

This sequence belongs to the peptidase M17 family. Mn(2+) is required as a cofactor.

Its subcellular location is the cytoplasm. The catalysed reaction is Release of an N-terminal amino acid, Xaa-|-Yaa-, in which Xaa is preferably Leu, but may be other amino acids including Pro although not Arg or Lys, and Yaa may be Pro. Amino acid amides and methyl esters are also readily hydrolyzed, but rates on arylamides are exceedingly low.. The enzyme catalyses Release of an N-terminal amino acid, preferentially leucine, but not glutamic or aspartic acids.. In terms of biological role, presumably involved in the processing and regular turnover of intracellular proteins. Catalyzes the removal of unsubstituted N-terminal amino acids from various peptides. In Baumannia cicadellinicola subsp. Homalodisca coagulata, this protein is Probable cytosol aminopeptidase.